The sequence spans 125 residues: Mini-ribonuclease 3 (125 aa).

Residue D11 is part of the active site.

It belongs to the MrnC RNase family. Homodimer. Requires Mg(2+) as cofactor.

It localises to the cytoplasm. In terms of biological role, involved in correct processing of both the 5' and 3' ends of 23S rRNA precursor. Processes 30S rRNA precursor transcript even in absence of ribonuclease 3 (Rnc); Rnc processes 30S rRNA into smaller rRNA precursors. This is Mini-ribonuclease 3 from Acholeplasma laidlawii (strain PG-8A).